A 304-amino-acid polypeptide reads, in one-letter code: Voltage-dependent anion channel-forming protein YneE (304 aa).

4 consecutive transmembrane segments (helical) span residues 28-48 (LLLN…YTHL), 50-70 (IKFT…FLGF), 194-214 (VLAG…TLIL), and 220-240 (LFCI…TPFI).

The protein belongs to the anion channel-forming bestrophin (TC 1.A.46) family.

It is found in the cell membrane. This Escherichia coli O157:H7 protein is Voltage-dependent anion channel-forming protein YneE (yneE).